Consider the following 83-residue polypeptide: Kunitz-type serine protease inhibitor vestiginin-1 (83 aa).

Residues Met1–Ser24 form the signal peptide. A BPTI/Kunitz inhibitor domain is found at Cys31–Cys81. 3 cysteine pairs are disulfide-bonded: Cys31–Cys81, Cys40–Cys64, and Cys56–Cys77.

It belongs to the venom Kunitz-type family. Expressed by the venom gland.

The protein localises to the secreted. Serine protease inhibitor. This is Kunitz-type serine protease inhibitor vestiginin-1 from Demansia vestigiata (Lesser black whip snake).